Consider the following 269-residue polypeptide: Thiazole synthase (269 aa).

Catalysis depends on Lys-112, which acts as the Schiff-base intermediate with DXP. Residues Gly-173, 199–200 (AG), and 221–222 (NT) contribute to the 1-deoxy-D-xylulose 5-phosphate site.

Belongs to the ThiG family. In terms of assembly, homotetramer. Forms heterodimers with either ThiH or ThiS.

It is found in the cytoplasm. It catalyses the reaction [ThiS sulfur-carrier protein]-C-terminal-Gly-aminoethanethioate + 2-iminoacetate + 1-deoxy-D-xylulose 5-phosphate = [ThiS sulfur-carrier protein]-C-terminal Gly-Gly + 2-[(2R,5Z)-2-carboxy-4-methylthiazol-5(2H)-ylidene]ethyl phosphate + 2 H2O + H(+). It functions in the pathway cofactor biosynthesis; thiamine diphosphate biosynthesis. Catalyzes the rearrangement of 1-deoxy-D-xylulose 5-phosphate (DXP) to produce the thiazole phosphate moiety of thiamine. Sulfur is provided by the thiocarboxylate moiety of the carrier protein ThiS. In vitro, sulfur can be provided by H(2)S. This is Thiazole synthase from Caulobacter vibrioides (strain ATCC 19089 / CIP 103742 / CB 15) (Caulobacter crescentus).